Reading from the N-terminus, the 116-residue chain is uncharacterized protein (116 aa).

Residues 20-42 (YLNKYYSVITYFLAFLTKFAILL) form a helical membrane-spanning segment. A disordered region spans residues 95 to 116 (IEFQSKSSPVPPASESNKGINE).

The protein localises to the membrane. This is an uncharacterized protein from Saccharomyces cerevisiae (strain ATCC 204508 / S288c) (Baker's yeast).